The primary structure comprises 810 residues: Phospholipase D alpha 2 (810 aa).

In terms of domain architecture, C2 spans 1 to 126 (MEECLLHGRL…LHGEEVDRWV (126 aa)). A Ca(2+)-binding site is contributed by D187. A PLD phosphodiesterase 1 domain is found at 327 to 365 (TMFTHHQKIVVVDSEMPSGGSRSRRIVSFVGGLDLCDGR). Active-site residues include H332, K334, and D339. Position 332 (H332) interacts with a 1,2-diacyl-sn-glycero-3-phosphate. Residues H371 and H405 each contribute to the Ca(2+) site. Residues Q521 and H661 each contribute to the a 1,2-diacyl-sn-glycero-3-phosphate site. Residues 656-683 (FMIYVHTKMMIVDDEYIIIGSANINQRS) enclose the PLD phosphodiesterase 2 domain. Residues H661, K663, and D668 contribute to the active site. E722 provides a ligand contact to Ca(2+).

It belongs to the phospholipase D family. C2-PLD subfamily. Ca(2+) serves as cofactor. As to expression, highly expressed in roots, stems and flowers, moderately in leaves, seedlings and siliques. Not detected in dry seeds.

Its subcellular location is the cytoplasm. The protein resides in the membrane. It is found in the vacuole. The protein localises to the cytoplasmic vesicle. It localises to the clathrin-coated vesicle. The enzyme catalyses a 1,2-diacyl-sn-glycero-3-phosphocholine + H2O = a 1,2-diacyl-sn-glycero-3-phosphate + choline + H(+). Functionally, hydrolyzes glycerol-phospholipids at the terminal phosphodiesteric bond to generate phosphatidic acids (PA). Plays an important role in various cellular processes, including phytohormone action and response to stress, characterized by acidification of the cell. This is Phospholipase D alpha 2 from Arabidopsis thaliana (Mouse-ear cress).